Consider the following 62-residue polypeptide: Photosystem II reaction center protein Z (62 aa).

Transmembrane regions (helical) follow at residues 8-28 (TLFALILFSFVLVVGVPVVFA) and 41-61 (LSGLGLWILLVFVVGILNSFV).

This sequence belongs to the PsbZ family. In terms of assembly, PSII is composed of 1 copy each of membrane proteins PsbA, PsbB, PsbC, PsbD, PsbE, PsbF, PsbH, PsbI, PsbJ, PsbK, PsbL, PsbM, PsbT, PsbY, PsbZ, Psb30/Ycf12, at least 3 peripheral proteins of the oxygen-evolving complex and a large number of cofactors. It forms dimeric complexes.

The protein resides in the plastid. It is found in the chloroplast thylakoid membrane. Its function is as follows. May control the interaction of photosystem II (PSII) cores with the light-harvesting antenna, regulates electron flow through the 2 photosystem reaction centers. PSII is a light-driven water plastoquinone oxidoreductase, using light energy to abstract electrons from H(2)O, generating a proton gradient subsequently used for ATP formation. This chain is Photosystem II reaction center protein Z, found in Stigeoclonium helveticum (Green alga).